The sequence spans 183 residues: Large ribosomal subunit protein uL5 (183 aa).

It belongs to the universal ribosomal protein uL5 family. As to quaternary structure, part of the 50S ribosomal subunit; part of the 5S rRNA/L5/L18/L25 subcomplex. Contacts the 5S rRNA and the P site tRNA. Forms a bridge to the 30S subunit in the 70S ribosome.

Its function is as follows. This is one of the proteins that bind and probably mediate the attachment of the 5S RNA into the large ribosomal subunit, where it forms part of the central protuberance. In the 70S ribosome it contacts protein S13 of the 30S subunit (bridge B1b), connecting the 2 subunits; this bridge is implicated in subunit movement. Contacts the P site tRNA; the 5S rRNA and some of its associated proteins might help stabilize positioning of ribosome-bound tRNAs. This Fusobacterium nucleatum subsp. nucleatum (strain ATCC 25586 / DSM 15643 / BCRC 10681 / CIP 101130 / JCM 8532 / KCTC 2640 / LMG 13131 / VPI 4355) protein is Large ribosomal subunit protein uL5.